We begin with the raw amino-acid sequence, 189 residues long: EIEFTRTMHGIMRNISHFCSRTKSRTWGKDGWPKIVVCVIADGRQKVHPRTLNALAALGVYQDGIAKNVVNKKEVTAHVYEYTTQVSLDEGMKFKGAEKGIVPCQMIFCLKEQNKRKLNSHRWFFNAFGRALTPNVCILLDVGTKPDSKALYHLWKAFDQDSNVAGAAGEIKADKGKGWLGLLNPLVAS.

The protein belongs to the chitin synthase family. Class II subfamily.

The protein localises to the cell membrane. It catalyses the reaction [(1-&gt;4)-N-acetyl-beta-D-glucosaminyl](n) + UDP-N-acetyl-alpha-D-glucosamine = [(1-&gt;4)-N-acetyl-beta-D-glucosaminyl](n+1) + UDP + H(+). Functionally, polymerizes chitin, a structural polymer of the cell wall and septum, by transferring the sugar moiety of UDP-GlcNAc to the non-reducing end of the growing chitin polymer. The chain is Chitin synthase 2 (CHS2) from Exophiala exophialae (Black yeast-like fungus).